Here is a 113-residue protein sequence, read N- to C-terminus: Mitochondrial import inner membrane translocase subunit tim16 (113 aa).

Residues 56 to 108 (KILGLENVETVSKEDIDKKYNELLTINDPKDGGSEYLQIKISGAKHCLHSALK) are J-like.

It belongs to the TIM16/PAM16 family. In terms of assembly, probable component of the PAM complex at least composed of a mitochondrial HSP70 protein, grepE, tim16 and tim14. Associates with the TIM23 complex.

The protein resides in the mitochondrion inner membrane. Regulates ATP-dependent protein translocation into the mitochondrial matrix. The sequence is that of Mitochondrial import inner membrane translocase subunit tim16 (timm16) from Dictyostelium discoideum (Social amoeba).